The primary structure comprises 108 residues: Somatoliberin (108 aa).

An N-terminal signal peptide occupies residues Met-1–Ser-20. A propeptide spanning residues Pro-21 to Arg-31 is cleaved from the precursor. At Leu-75 the chain carries Leucine amide. Positions Gln-78–Gly-108 are excised as a propeptide.

It belongs to the glucagon family.

It is found in the secreted. Functionally, GRF is released by the hypothalamus and acts on the adenohypophyse to stimulate the secretion of growth hormone. This is Somatoliberin (GHRH) from Homo sapiens (Human).